The chain runs to 152 residues: Cornifin-A (152 aa).

The disordered stretch occupies residues 20-40 (EVKQPCQPPPQEPCAPKTKEP). A run of 14 repeats spans residues 27–34 (PPPQEPCA), 35–42 (PKTKEPCH), 43–49 (PIPEPCN), 50–57 (PKVPEPCQ), 58–65 (PKVPEPCQ), 66–73 (PKVPEPCQ), 74–81 (PKVPEPCQ), 82–89 (PKVPEPCQ), 90–97 (PKVPEPCQ), 98–105 (PKVPEPCH), 106–113 (PKAPEPCH), 114–121 (PVVPEPCQ), 122–129 (PVAPEPCQ), and 130–137 (PVVPEPCP). The segment at 27-137 (PPPQEPCAPK…CQPVVPEPCP (111 aa)) is 14 X 8 AA approximate tandem repeats.

Belongs to the cornifin (SPRR) family. In terms of tissue distribution, in squamous epithelia lining the nasal vestibule and in the hard palate.

It is found in the cytoplasm. Its function is as follows. Cross-linked envelope protein of keratinocytes. It is a keratinocyte protein that first appears in the cell cytosol, but ultimately becomes cross-linked to membrane proteins by transglutaminase. All that results in the formation of an insoluble envelope beneath the plasma membrane. This is Cornifin-A (Sprr1a) from Rattus norvegicus (Rat).